A 107-amino-acid chain; its full sequence is Nucleoid-associated protein R00231 (107 aa).

It belongs to the YbaB/EbfC family. As to quaternary structure, homodimer.

It localises to the cytoplasm. Its subcellular location is the nucleoid. Binds to DNA and alters its conformation. May be involved in regulation of gene expression, nucleoid organization and DNA protection. The chain is Nucleoid-associated protein R00231 from Rhizobium meliloti (strain 1021) (Ensifer meliloti).